Here is a 359-residue protein sequence, read N- to C-terminus: NF-kappa-B inhibitor beta (359 aa).

Phosphoserine; by RPS6KA1 is present on residues Ser-19 and Ser-23. 6 ANK repeats span residues 57-86 (DGDT…GTEY), 93-122 (LGQT…GVLV), 126-155 (GGHT…SHPR), 206-235 (DGHT…DLNK), 240-269 (CGRT…DPTA), and 273-302 (GGRT…PEPE). A disordered region spans residues 153 to 192 (HPRDASDTYLTQSQDHTPDTSHAPVATDPQPNPGNEEELR). Residues 298–308 (APEPEDKDDKL) show a composition bias toward basic and acidic residues. The tract at residues 298–359 (APEPEDKDDK…KPLPDDPNPA (62 aa)) is disordered. Phosphoserine is present on Ser-318. Acidic residues predominate over residues 318 to 331 (SDSDNRDEGDEYDD). Positions 342 to 359 (QPPPSPAAKPLPDDPNPA) are enriched in pro residues.

This sequence belongs to the NF-kappa-B inhibitor family. Interacts with THRB (via ligand-binding domain). Interacts with RELA and REL. Interacts with COMMD1. Interacts with inhibitor kappa B-interacting Ras-like NKIRAS1 and NKIRAS2. Phosphorylated by RPS6KA1; followed by degradation. Interaction with NKIRAS1 and NKIRAS2 probably prevents phosphorylation.

Its subcellular location is the cytoplasm. The protein resides in the nucleus. Its function is as follows. Inhibits NF-kappa-B by complexing with and trapping it in the cytoplasm. However, the unphosphorylated form resynthesized after cell stimulation is able to bind NF-kappa-B allowing its transport to the nucleus and protecting it to further NFKBIA-dependent inactivation. Association with inhibitor kappa B-interacting NKIRAS1 and NKIRAS2 prevent its phosphorylation rendering it more resistant to degradation, explaining its slower degradation. The sequence is that of NF-kappa-B inhibitor beta (Nfkbib) from Rattus norvegicus (Rat).